A 69-amino-acid chain; its full sequence is MPKQIHEIKDFLLTARRKDARTVKIKKNKDMVKFKVRCSKYLYTLCVSDFEKADKLKQSLPPGLSVQDL.

The protein belongs to the eukaryotic ribosomal protein eL38 family.

The polypeptide is Large ribosomal subunit protein eL38 (RPL38) (Solanum lycopersicum (Tomato)).